Reading from the N-terminus, the 351-residue chain is Pinopsin (351 aa).

At Met-1–Thr-30 the chain is on the extracellular side. A glycan (N-linked (GlcNAc...) asparagine) is linked at Asn-4. A helical transmembrane segment spans residues Tyr-31–Val-55. Residues Ser-56 to Asn-67 lie on the Cytoplasmic side of the membrane. The chain crosses the membrane as a helical span at residues Tyr-68–Asn-92. The Extracellular portion of the chain corresponds to Ile-93–Glu-107. A disulfide bridge links Cys-104 with Cys-181. The chain crosses the membrane as a helical span at residues Gly-108–Leu-127. Topologically, residues Glu-128 to His-146 are cytoplasmic. The chain crosses the membrane as a helical span at residues Ala-147–Ser-170. The Extracellular portion of the chain corresponds to Ser-171–Ser-194. Residue Asn-192 is glycosylated (N-linked (GlcNAc...) asparagine). A helical membrane pass occupies residues Tyr-195 to Leu-222. Topologically, residues Arg-223–Arg-244 are cytoplasmic. A helical transmembrane segment spans residues Met-245–Ala-268. The Extracellular portion of the chain corresponds to Thr-269–Gln-276. Residues Pro-277–Met-301 traverse the membrane as a helical segment. Lys-288 carries the N6-(retinylidene)lysine modification. The Cytoplasmic segment spans residues Asn-302–Val-351. Residues Cys-314 and Cys-315 are each lipidated (S-palmitoyl cysteine).

This sequence belongs to the G-protein coupled receptor 1 family. Opsin subfamily. Post-translationally, phosphorylated on some or all of the serine and threonine residues present in the C-terminal region. Pineal gland.

The protein localises to the membrane. Its function is as follows. Produces a slow and prolonged phototransduction response consistent with the non-visual function of pineal photoreception. This Gallus gallus (Chicken) protein is Pinopsin.